A 591-amino-acid polypeptide reads, in one-letter code: DDB1- and CUL4-associated factor 8 (591 aa).

The span at 1-25 shows a compositional bias: polar residues; the sequence is MSNKRPNTTDGRTDLANGSLSSSPE. The interval 1–140 is disordered; it reads MSNKRPNTTD…EDWVSSETTA (140 aa). S22 and S23 each carry phosphoserine. The short motif at 40–51 is the Nuclear export signal element; that stretch reads IEVEASDLSLSL. Composition is skewed to basic and acidic residues over residues 66 to 100 and 118 to 131; these read RGTD…HGHS and SRDQ…RALE. Phosphoserine is present on residues S100, S123, and S124. WD repeat units follow at residues 185-224, 228-269, 275-315, 323-363, 379-418, 426-466, and 470-509; these read GHTG…PVLD, GHKS…CCKN, QHKG…PASK, EKKV…ENEN, ESKA…GAQY, RNNA…IIQF, and DKGG…STEL. Position 198 is an omega-N-methylarginine; by PRMT1 (R198). A disordered region spans residues 552-591; sequence HRRWREPGVGATDADSDESPSSSDTSDEEEGPDRVQCMPS.

The protein belongs to the WD repeat DCAF8 family. Interacts with DDB1, CUL4A and CUL4B. Interacts with KPNA1, KPNB1 and XPO1. As to expression, expressed in the brain.

The protein resides in the nucleus. It localises to the cytoplasm. Its pathway is protein modification; protein ubiquitination. In terms of biological role, may function as a substrate receptor for CUL4-DDB1 E3 ubiquitin-protein ligase complex. This is DDB1- and CUL4-associated factor 8 (Dcaf8) from Mus musculus (Mouse).